We begin with the raw amino-acid sequence, 93 residues long: Sec-independent protein translocase protein TatA (93 aa).

A helical transmembrane segment spans residues 1–21 (MGNVFSGWHLLVILLVIVLLF). A disordered region spans residues 49–93 (DITRSQDGHPDSQGNFAESASSVPFVKSEKQSEKRASVTEAKKSK). Polar residues predominate over residues 60-70 (SQGNFAESASS). A compositionally biased stretch (basic and acidic residues) spans 75-93 (KSEKQSEKRASVTEAKKSK).

This sequence belongs to the TatA/E family. In terms of assembly, the Tat system comprises two distinct complexes: a TatABC complex, containing multiple copies of TatA, TatB and TatC subunits, and a separate TatA complex, containing only TatA subunits. Substrates initially bind to the TatABC complex, which probably triggers association of the separate TatA complex to form the active translocon.

It is found in the cell membrane. Functionally, part of the twin-arginine translocation (Tat) system that transports large folded proteins containing a characteristic twin-arginine motif in their signal peptide across membranes. TatA could form the protein-conducting channel of the Tat system. This is Sec-independent protein translocase protein TatA from Tropheryma whipplei (strain TW08/27) (Whipple's bacillus).